We begin with the raw amino-acid sequence, 196 residues long: MEGIRRAAQRAVEEFLQAFPMGPGSLFVLGGSTSEVLGERVGTRPSLEAAHAVLEGLLPPLLERGVHVAVQACEHLNRALVVERETARAFGLEEVAVFPHPKAGGALATAAFLRFQDPVVVESLKAQAHGGMDIGGVLIGMHLRPVAVPLRLSVRKIGEAVLLAAKTRPKLVGGARAVYTREEMLKKLEEFLPKPP.

The protein belongs to the UPF0340 family.

The polypeptide is UPF0340 protein TT_C0214 (Thermus thermophilus (strain ATCC BAA-163 / DSM 7039 / HB27)).